A 325-amino-acid polypeptide reads, in one-letter code: Dimethylsulfide dehydrogenase subunit beta (325 aa).

3 consecutive 4Fe-4S ferredoxin-type domains span residues 6 to 35, 123 to 154, and 156 to 185; these read ISMV…RNGR, SYYF…KRQE, and GIVL…FNEQ. Residues Cys-15, Cys-18, Cys-21, Cys-25, Cys-132, Cys-135, and Cys-140 each contribute to the [4Fe-4S] cluster site. Residues Cys-144, Cys-165, and Cys-171 each contribute to the [3Fe-4S] cluster site. [4Fe-4S] cluster is bound by residues Cys-175, Cys-192, Cys-195, Cys-207, and Cys-211.

Heterotrimer of alpha, beta and gamma subunits. The cofactor is [3Fe-4S] cluster. It depends on [4Fe-4S] cluster as a cofactor.

Its subcellular location is the periplasm. In terms of biological role, electron transfer subunit of the dehydrogenase during anaerobic growth on dimethyl sulfide. This Rhodovulum sulfidophilum (Rhodobacter sulfidophilus) protein is Dimethylsulfide dehydrogenase subunit beta (ddhB).